Consider the following 533-residue polypeptide: CTP synthase (533 aa).

The amidoligase domain stretch occupies residues 1 to 268 (MGETKYIFVT…DETILQKMGL (268 aa)). Position 15 (Ser15) interacts with CTP. Ser15 is a binding site for UTP. ATP is bound at residue 16–21 (SLGKGI). Tyr56 contributes to the L-glutamine binding site. Asp73 is an ATP binding site. Mg(2+) contacts are provided by Asp73 and Glu143. CTP is bound by residues 150-152 (DIE), 189-194 (KTKPTQ), and Lys225. UTP-binding positions include 189-194 (KTKPTQ) and Lys225. A Glutamine amidotransferase type-1 domain is found at 301-533 (YVELQDAYKS…VSFIKAAIDK (233 aa)). Residue Gly356 participates in L-glutamine binding. The Nucleophile; for glutamine hydrolysis role is filled by Cys383. L-glutamine contacts are provided by residues 384-387 (LGMQ), Glu407, and Arg464. Active-site residues include His509 and Glu511.

The protein belongs to the CTP synthase family. Homotetramer.

It carries out the reaction UTP + L-glutamine + ATP + H2O = CTP + L-glutamate + ADP + phosphate + 2 H(+). The enzyme catalyses L-glutamine + H2O = L-glutamate + NH4(+). It catalyses the reaction UTP + NH4(+) + ATP = CTP + ADP + phosphate + 2 H(+). It functions in the pathway pyrimidine metabolism; CTP biosynthesis via de novo pathway; CTP from UDP: step 2/2. Allosterically activated by GTP, when glutamine is the substrate; GTP has no effect on the reaction when ammonia is the substrate. The allosteric effector GTP functions by stabilizing the protein conformation that binds the tetrahedral intermediate(s) formed during glutamine hydrolysis. Inhibited by the product CTP, via allosteric rather than competitive inhibition. Catalyzes the ATP-dependent amination of UTP to CTP with either L-glutamine or ammonia as the source of nitrogen. Regulates intracellular CTP levels through interactions with the four ribonucleotide triphosphates. In Bacteroides fragilis (strain YCH46), this protein is CTP synthase.